A 417-amino-acid chain; its full sequence is 3-ketoacyl-CoA thiolase, peroxisomal (417 aa).

The N-terminal 15 residues, 1–15 (MSQRLQSIKDHLVES), are a transit peptide targeting the peroxisome. Residues 1–15 (MSQRLQSIKDHLVES) are PTS2-type peroxisomal targeting signal. Cys-125 serves as the catalytic Acyl-thioester intermediate. Residues His-375 and Cys-403 each act as proton acceptor in the active site.

This sequence belongs to the thiolase-like superfamily. Thiolase family. As to quaternary structure, homodimer. Interacts (via PTS2-type peroxisomal targeting signal region) with PEX7; leading to its translocation into peroxisomes.

The protein localises to the peroxisome. Its subcellular location is the mitochondrion intermembrane space. The enzyme catalyses an acyl-CoA + acetyl-CoA = a 3-oxoacyl-CoA + CoA. It participates in lipid metabolism; fatty acid metabolism. Its function is as follows. Responsible for the thiolytic cleavage of straight chain 3-keto fatty acyl-CoAs (3-oxoacyl-CoAs). This is 3-ketoacyl-CoA thiolase, peroxisomal (POT1) from Saccharomyces cerevisiae (strain ATCC 204508 / S288c) (Baker's yeast).